We begin with the raw amino-acid sequence, 412 residues long: Argininosuccinate synthase (412 aa).

ATP is bound by residues Ala15–Ser23 and Ala42. Positions 93 and 98 each coordinate L-citrulline. Gly123 contributes to the ATP binding site. The L-aspartate site is built by Thr125, Asn129, and Asp130. Asn129 contacts L-citrulline. L-citrulline is bound by residues Arg133, Ser185, Ser194, Glu270, and Tyr282.

Belongs to the argininosuccinate synthase family. Type 1 subfamily. In terms of assembly, homotetramer.

It localises to the cytoplasm. The catalysed reaction is L-citrulline + L-aspartate + ATP = 2-(N(omega)-L-arginino)succinate + AMP + diphosphate + H(+). It participates in amino-acid biosynthesis; L-arginine biosynthesis; L-arginine from L-ornithine and carbamoyl phosphate: step 2/3. The sequence is that of Argininosuccinate synthase from Psychrobacter arcticus (strain DSM 17307 / VKM B-2377 / 273-4).